Consider the following 118-residue polypeptide: Basic phospholipase A2 PA-12A (118 aa).

7 cysteine pairs are disulfide-bonded: Cys11–Cys71, Cys27–Cys117, Cys29–Cys45, Cys44–Cys98, Cys51–Cys91, Cys60–Cys84, and Cys78–Cys89. 3 residues coordinate Ca(2+): Tyr28, Gly30, and Gly32. The active site involves His48. A Ca(2+)-binding site is contributed by Asp49. Asp92 is an active-site residue.

It belongs to the phospholipase A2 family. Group I subfamily. D49 sub-subfamily. Ca(2+) is required as a cofactor. As to expression, expressed by the venom gland.

Its subcellular location is the secreted. It carries out the reaction a 1,2-diacyl-sn-glycero-3-phosphocholine + H2O = a 1-acyl-sn-glycero-3-phosphocholine + a fatty acid + H(+). Functionally, PLA2 catalyzes the calcium-dependent hydrolysis of the 2-acyl groups in 3-sn-phosphoglycerides. This Pseudechis australis (Mulga snake) protein is Basic phospholipase A2 PA-12A.